The primary structure comprises 248 residues: 14-3-3 protein (248 aa).

Coiled-coil stretches lie at residues 13-33 (MAQL…MRKI) and 91-111 (RQKI…LLQE). 135–136 (RY) is a binding site for O-phospho-L-serine. Residue T214 is modified to Phosphothreonine. Positions 237–248 (TDSAGDDNAEEK) match the Putative polyglycylation target motif (T/G)X0-1(D/E)X1-3-G(D/E)X1-2(gE)2-4, where X is polar or negatively charged amino acid, and gE is polyglycylated glutamine motif. E246 carries the 5-glutamyl polyglycine modification.

It belongs to the 14-3-3 family. In terms of assembly, homodimer. Homodimerizes via N-terminal domains. Oligomerizes forming homotrimers, homotetramers and protein filaments. Oligomerization is hindered by polyglycylation in vivo. Interacts with a large number of both cytosolic and membrane proteins in trophozoites and encysting parasites. Interacts with a serine/threonine protein kinase GL50803_112076 (gCDC7). Component of a multiprotein complex containing gCDC7 and GL50803_94117 (gDBF4), a regulatory subunit of gCDC7, during both the trophozoite and encysting stages of the parasite. Interacts with fructose-bisphosphate aldolase GL50803_11043 (gFBA), pyruvate kinase GL50803_17143 (gPyk), acetyl-CoA synthetase GL50803_13608 (gACS), protein kinase GL50803_22165 (gSTE), DEAD box RNA helicase GL50803_34684 (gVASA) and Golgi/cell cycle associated protein GL50803_17472 (gGCCA). Interacts with actin. Interacts with both monomeric phosphorylated and unphosphorylated actin. The interaction is enhanced by phosphorylation of actin and inhibited by Rho GTPase Rac. In terms of processing, phosphorylated constitutively throughout the life cycle. Phosphorylation is very high in trophozoites and encysting cells of 12 hours. Phosphorylated during excystation. Phosphorylation promotes its binding to various target proteins and is critical for encystation process. Phosphorylation modification is not influenced by polyglycylation modification. Polyglycylated on a glutamate residue, resulting in polyglycine chain on the gamma-carboxyl group. Polyglycylated by the tubulin--tyrosine ligase-like protein GL50803_8456 (gTTLL3). The polyglycine chain is shortened by metallopeptidases of the M20 family, namely dipeptidases GL50803_15832 (gDIP1) and GL50803_8407 (gDIP2). The length of the polyglycine chain is developmental stage-dependent. In trophozoites, glycine residues range from 10 to 31, with the greatest occurrence of 21 residues. In 12 hour encystation stage, glycine residues range from 6 to 22, with the greatest occurrence of 10 residues. The differential rate of polyglycylation/deglycylation during the encystation process regulates the intracellular localization of this protein. Relocalizes partially from the cytoplasm inside the nuclei following the shortening of the polyglycine chain in encysting cells. Polyglycylation modification is not influenced by phosphorylation modification. Polyglycylation prevents oligomerization in vivo.

Its subcellular location is the cytoplasm. It is found in the cytoskeleton. The protein resides in the nucleus. It localises to the cell projection. The protein localises to the cilium. Its subcellular location is the flagellum. It is found in the spindle. The protein resides in the nucleus envelope. It localises to the endoplasmic reticulum. Adapter protein implicated in the regulation of a large spectrum of both general and specialized signaling pathways. Binds to a large number of partners, usually by recognition of a phosphoserine or phosphothreonine motif. Binding generally results in the modulation of the activity of the binding partner. Binds with varying affinity to various synthetic phosphopeptides having a consensus binding motif RSX(pS/pT)XP, called mode-1, where X is any residue and pS/pT is a phosphorylated serine/threonine, and to synthetic phosphopeptides having a consensus binding motif Xp(S/T)X1-2-COOH, called mode-3, in which the phosphorylated residue occupies the penultimate C-terminal position in the target protein, but does not bind to their unphosphorylated counterparts. Binds to synthetic human RAF1 phosphopeptides, but not to their unphosphorylated forms. Binds to difopein, a polypeptide containing a phosphorylation-independent binding motif. Involved in encystation. Involved in cell proliferation. Required for actin and tubulin cytoskeletal organization. Regulates actin filament formation and nuclear size. The chain is 14-3-3 protein from Giardia intestinalis (strain ATCC 50803 / WB clone C6) (Giardia lamblia).